The primary structure comprises 204 residues: MRYTSTAIEALIEEFAKLPGIGRKTAQRLSMHILQEKPGEVEKLSRALTDVKEKVISCSICQNVTDRGDDPCSICRGKGRDLSKICVVESPPDVLAFEKTAQYRGLYHVLHGVISPLDGVGPDDIKVKELLARLSLQDGREVSEVIMALSPTVEGETTVLYVSRLLKPLGIEVTKIARGIPVGAELEYIDEATLSRAMEGRSVL.

The segment at 58–75 (CSICQNVTDRGDDPCSIC) adopts a C4-type zinc-finger fold. One can recognise a Toprim domain in the interval 83–181 (SKICVVESPP…EVTKIARGIP (99 aa)).

The protein belongs to the RecR family.

Its function is as follows. May play a role in DNA repair. It seems to be involved in an RecBC-independent recombinational process of DNA repair. It may act with RecF and RecO. The polypeptide is Recombination protein RecR (Chlorobium phaeobacteroides (strain BS1)).